The sequence spans 81 residues: Cytochrome b559 subunit alpha (81 aa).

The chain crosses the membrane as a helical span at residues 21 to 35 (VIHSITIPALFIAGW). His-23 lines the heme pocket.

This sequence belongs to the PsbE/PsbF family. Heterodimer of an alpha subunit and a beta subunit. PSII is composed of 1 copy each of membrane proteins PsbA, PsbB, PsbC, PsbD, PsbE, PsbF, PsbH, PsbI, PsbJ, PsbK, PsbL, PsbM, PsbT, PsbX, PsbY, PsbZ, Psb30/Ycf12, at least 3 peripheral proteins of the oxygen-evolving complex and a large number of cofactors. It forms dimeric complexes. Requires heme b as cofactor.

It is found in the plastid. The protein localises to the chloroplast thylakoid membrane. Functionally, this b-type cytochrome is tightly associated with the reaction center of photosystem II (PSII). PSII is a light-driven water:plastoquinone oxidoreductase that uses light energy to abstract electrons from H(2)O, generating O(2) and a proton gradient subsequently used for ATP formation. It consists of a core antenna complex that captures photons, and an electron transfer chain that converts photonic excitation into a charge separation. The chain is Cytochrome b559 subunit alpha from Tetradesmus obliquus (Green alga).